A 24-amino-acid chain; its full sequence is Heptapoietin A light chain (24 aa).

In terms of assembly, heterodimer of a heavy and a light chain linked by disulfide bond(s).

Functionally, HPTA is an acidic heparin-binding growth factor for hepatocytes. The polypeptide is Heptapoietin A light chain (Oryctolagus cuniculus (Rabbit)).